A 190-amino-acid polypeptide reads, in one-letter code: Xanthine phosphoribosyltransferase (190 aa).

Xanthine-binding residues include Leu20 and Asn27. 129 to 133 contacts 5-phospho-alpha-D-ribose 1-diphosphate; the sequence is ANGRA. Xanthine is bound at residue Lys157.

The protein belongs to the purine/pyrimidine phosphoribosyltransferase family. Xpt subfamily. In terms of assembly, homodimer.

The protein resides in the cytoplasm. It carries out the reaction XMP + diphosphate = xanthine + 5-phospho-alpha-D-ribose 1-diphosphate. The protein operates within purine metabolism; XMP biosynthesis via salvage pathway; XMP from xanthine: step 1/1. Converts the preformed base xanthine, a product of nucleic acid breakdown, to xanthosine 5'-monophosphate (XMP), so it can be reused for RNA or DNA synthesis. The sequence is that of Xanthine phosphoribosyltransferase from Clostridioides difficile (strain 630) (Peptoclostridium difficile).